Consider the following 404-residue polypeptide: MKSCVLAYSGGLDTSVILGWLQDQGYEVHCVYVDLGQPCEDRDAIMEKARTCGAKSSRLVDVREELCRDFAFPVLAWQAKYEQIYLLGTSIARPLISKVCLEVAREVGATAYAHGATGKGNDQCRFQLAAEALDPNIEMIAPWRIKSFRDAFPGRTELIEYCDVKRIPVKASTAKPYSSDENVLHISYEAGKLEELDVNGVELVEFGMGVSPQDAPDKPEEVTIGFESGVPKTLNGKAVNALEMVEQLNDIAGRNGVGRIDMVENRFVGMKSRGVYESPGMTVLYDALMYVEQLTMDRDLMHLRDRMAPEVAEMVYYGFWYTPKMDALMSFIETAQRPVTGEVTLQLYKGNIMVSSRTSPNSLYDEEIATMEGGGSYNQDDAEGFLRIQGLPSRVQGRVSPRKF.

An ATP-binding site is contributed by 7–15 (AYSGGLDTS). Residues Tyr85 and Ser90 each contribute to the L-citrulline site. Gly115 serves as a coordination point for ATP. The L-aspartate site is built by Thr117, Asn121, and Asp122. Asn121 serves as a coordination point for L-citrulline. Positions 125, 178, 187, 264, and 276 each coordinate L-citrulline.

This sequence belongs to the argininosuccinate synthase family. Type 1 subfamily. As to quaternary structure, homotetramer.

The protein resides in the cytoplasm. The catalysed reaction is L-citrulline + L-aspartate + ATP = 2-(N(omega)-L-arginino)succinate + AMP + diphosphate + H(+). It participates in amino-acid biosynthesis; L-arginine biosynthesis; L-arginine from L-ornithine and carbamoyl phosphate: step 2/3. The polypeptide is Argininosuccinate synthase (Rhodopirellula baltica (strain DSM 10527 / NCIMB 13988 / SH1)).